The sequence spans 640 residues: Probable Ufm1-specific protease (640 aa).

Catalysis depends on residues C467, D591, and H593.

Belongs to the peptidase C78 family.

Functionally, thiol protease which recognizes and hydrolyzes the peptide bond at the C-terminal Gly of ufm-1, a ubiquitin-like modifier protein bound to a number of target proteins. This Oryza sativa subsp. japonica (Rice) protein is Probable Ufm1-specific protease.